The following is a 410-amino-acid chain: Ribulose bisphosphate carboxylase large chain (410 aa).

Substrate-binding residues include Asn-100 and Thr-150. Lys-152 (proton acceptor) is an active-site residue. Residue Lys-154 coordinates substrate. Mg(2+) is bound by residues Lys-178, Asp-180, and Glu-181. N6-carboxylysine is present on Lys-178. The active-site Proton acceptor is the His-271. Substrate is bound by residues Arg-272, His-304, and Ser-356.

Belongs to the RuBisCO large chain family. Type I subfamily. As to quaternary structure, heterohexadecamer of 8 large chains and 8 small chains; disulfide-linked. The disulfide link is formed within the large subunit homodimers. The cofactor is Mg(2+). Post-translationally, the disulfide bond which can form in the large chain dimeric partners within the hexadecamer appears to be associated with oxidative stress and protein turnover.

It is found in the plastid. The protein localises to the chloroplast. The enzyme catalyses 2 (2R)-3-phosphoglycerate + 2 H(+) = D-ribulose 1,5-bisphosphate + CO2 + H2O. It catalyses the reaction D-ribulose 1,5-bisphosphate + O2 = 2-phosphoglycolate + (2R)-3-phosphoglycerate + 2 H(+). In terms of biological role, ruBisCO catalyzes two reactions: the carboxylation of D-ribulose 1,5-bisphosphate, the primary event in carbon dioxide fixation, as well as the oxidative fragmentation of the pentose substrate in the photorespiration process. Both reactions occur simultaneously and in competition at the same active site. This is Ribulose bisphosphate carboxylase large chain (rbcL) from Gleichenia japonica (Urajiro).